A 153-amino-acid polypeptide reads, in one-letter code: Peptidoglycan-associated lipoprotein (153 aa).

The first 19 residues, 1–19 (MNKFVKSLLVAGSVAALAA), serve as a signal peptide directing secretion. Cys20 carries the N-palmitoyl cysteine lipid modification. Cys20 is lipidated: S-diacylglycerol cysteine. The region spanning 40–153 (SVADLQQRYN…SKNRRAVLAY (114 aa)) is the OmpA-like domain. 2 peptidoglycan binding regions span residues 55–56 (FD) and 97–101 (YNIAL).

This sequence belongs to the Pal lipoprotein family. As to quaternary structure, the Tol-Pal system is composed of five core proteins: the inner membrane proteins TolA, TolQ and TolR, the periplasmic protein TolB and the outer membrane protein Pal. They form a network linking the inner and outer membranes and the peptidoglycan layer.

The protein resides in the cell outer membrane. In terms of biological role, part of the Tol-Pal system, which plays a role in outer membrane invagination during cell division and is important for maintaining outer membrane integrity. In Haemophilus influenzae (strain ATCC 51907 / DSM 11121 / KW20 / Rd), this protein is Peptidoglycan-associated lipoprotein.